The following is a 375-amino-acid chain: Killer cell immunoglobulin-like receptor 2DL5A (375 aa).

Positions 1 to 21 (MSLMVISMACVGFFLLQGAWT) are cleaved as a signal peptide. The Extracellular segment spans residues 22–238 (HEGGQDKPLL…PSSKTGIRRH (217 aa)). 2 consecutive Ig-like C2-type domains span residues 42–102 (GGHV…HPRS) and 137–200 (GENV…LHDS). Cysteine 49 and cysteine 95 are disulfide-bonded. N-linked (GlcNAc...) asparagine glycosylation is found at asparagine 139, asparagine 173, and asparagine 218. Cysteine 144 and cysteine 193 are oxidised to a cystine. Residues 213–233 (VSVTGNSSSSSSSPTEPSSKT) form a disordered region. The span at 219 to 231 (SSSSSSSPTEPSS) shows a compositional bias: low complexity. A helical membrane pass occupies residues 239–259 (LHILIGTSVAIILFIILFFFL). Residues 260–375 (LHCCCSNKKN…ASSHVPAAGI (116 aa)) are Cytoplasmic-facing. A disordered region spans residues 334–375 (AKPRSLSPAHKHHSQALRGSSRETTALSQNRVASSHVPAAGI). A compositionally biased stretch (polar residues) spans 355-366 (RETTALSQNRVA).

Belongs to the immunoglobulin superfamily.

It localises to the cell membrane. Functionally, receptor on natural killer (NK) cells for HLA-C alleles. Inhibits the activity of NK cells thus preventing cell lysis. The sequence is that of Killer cell immunoglobulin-like receptor 2DL5A (KIR2DL5A) from Homo sapiens (Human).